The chain runs to 554 residues: 3-(3-hydroxy-phenyl)propionate/3-hydroxycinnamic acid hydroxylase (554 aa).

Residues Gln-17 to Lys-46 and Phe-285 to Asp-295 each bind FAD.

This sequence belongs to the PheA/TfdB FAD monooxygenase family. It depends on FAD as a cofactor.

It catalyses the reaction 3-(3-hydroxyphenyl)propanoate + NADH + O2 + H(+) = 3-(2,3-dihydroxyphenyl)propanoate + NAD(+) + H2O. The catalysed reaction is (2E)-3-(3-hydroxyphenyl)prop-2-enoate + NADH + O2 + H(+) = (2E)-3-(2,3-dihydroxyphenyl)prop-2-enoate + NAD(+) + H2O. The protein operates within aromatic compound metabolism; 3-phenylpropanoate degradation. Its function is as follows. Catalyzes the insertion of one atom of molecular oxygen into position 2 of the phenyl ring of 3-(3-hydroxyphenyl)propionate (3-HPP) and hydroxycinnamic acid (3HCI). The polypeptide is 3-(3-hydroxy-phenyl)propionate/3-hydroxycinnamic acid hydroxylase (Shigella sonnei (strain Ss046)).